Here is a 155-residue protein sequence, read N- to C-terminus: Cytochrome c oxidase subunit 4, mitochondrial (155 aa).

Residues 1-25 constitute a mitochondrion transit peptide; that stretch reads MLSLRQSIRFFKPATRTLCSSRYLL. Threonine 55 is subject to Phosphothreonine. Zn(2+)-binding residues include cysteine 111, histidine 119, cysteine 134, and cysteine 137.

This sequence belongs to the cytochrome c oxidase subunit 5B family. In terms of assembly, component of the cytochrome c oxidase (complex IV, CIV), a multisubunit enzyme composed of 12 subunits. The complex is composed of a catalytic core of 3 subunits COX1, COX2 and COX3, encoded in the mitochondrial DNA, and 9 supernumerary subunits COX4, COX5A (or COX5B), COX6, COX7, COX8, COX9, COX12, COX13 and COX26, which are encoded in the nuclear genome. The complex exists as a monomer or a dimer and forms supercomplexes (SCs) in the inner mitochondrial membrane with a dimer of ubiquinol-cytochrome c oxidoreductase (cytochrome b-c1 complex, complex III, CIII), resulting in 2 different assemblies (supercomplexes III(2)IV and III(2)IV(2)).

It is found in the mitochondrion inner membrane. It functions in the pathway energy metabolism; oxidative phosphorylation. Component of the cytochrome c oxidase, the last enzyme in the mitochondrial electron transport chain which drives oxidative phosphorylation. The respiratory chain contains 3 multisubunit complexes succinate dehydrogenase (complex II, CII), ubiquinol-cytochrome c oxidoreductase (cytochrome b-c1 complex, complex III, CIII) and cytochrome c oxidase (complex IV, CIV), that cooperate to transfer electrons derived from NADH and succinate to molecular oxygen, creating an electrochemical gradient over the inner membrane that drives transmembrane transport and the ATP synthase. Cytochrome c oxidase is the component of the respiratory chain that catalyzes the reduction of oxygen to water. Electrons originating from reduced cytochrome c in the intermembrane space (IMS) are transferred via the dinuclear copper A center (CU(A)) of COX2 and heme A of COX1 to the active site in COX1, a binuclear center (BNC) formed by heme A3 and copper B (CU(B)). The BNC reduces molecular oxygen to 2 water molecules using 4 electrons from cytochrome c in the IMS and 4 protons from the mitochondrial matrix. In Saccharomyces cerevisiae (strain ATCC 204508 / S288c) (Baker's yeast), this protein is Cytochrome c oxidase subunit 4, mitochondrial (COX4).